The following is a 462-amino-acid chain: Semenogelin-1 (462 aa).

The first 23 residues, Met1–Gly23, serve as a signal peptide directing secretion. Gln24 is modified (pyrrolidone carboxylic acid). Residues Gln24–Gly61 form a disordered region. Polar residues predominate over residues Gln46–Gly61. A run of 3 repeats spans residues His70–His129, Asn141–Glu200, and Leu201–Leu260. The interval His70–Ile439 is repeat-rich region. 2 disordered regions span residues Lys131–Ser157 and Lys173–Tyr194. Positions Gly138–Ser157 are enriched in polar residues. The tract at residues Glu164–Ala283 is interaction with EPPIN. A 2 X 60 AA tandem repeats, type 1 region spans residues Leu261–Lys380. The disordered stretch occupies residues Thr270 to Gly432. 3 stretches are compositionally biased toward polar residues: residues Asp308–Gln317, Gly324–Gln335, and Ala343–Ser352. Residues Leu381–Ile439 form a 3-2 repeat. Residues Arg413–Gly424 are compositionally biased toward basic and acidic residues.

This sequence belongs to the semenogelin family. As to quaternary structure, occurs in disulfide-linked complexes which may also contain two less abundant 71- and 76-kDa semenogelin-related polypeptides. Interacts with EPPIN (via C-terminus); Cys-239 is a critical amino acid for both binding to EPPIN. Transglutaminase substrate. In terms of processing, rapidly cleaved after ejaculation by KLK3/PSA, resulting in liquefaction of the semen coagulum and the progressive release of motile spermatozoa. As to expression, seminal vesicle.

Its subcellular location is the secreted. Functionally, predominant protein in semen. It participates in the formation of a gel matrix entrapping the accessory gland secretions and ejaculated spermatozoa. Fragments of semenogelin and/or fragments of the related proteins may contribute to the activation of progressive sperm movements as the gel-forming proteins are fragmented by KLK3/PSA. In terms of biological role, alpha-inhibin-92 and alpha-inhibin-31, derived from the proteolytic degradation of semenogelin, inhibit the secretion of pituitary follicle-stimulating hormone. The chain is Semenogelin-1 (SEMG1) from Homo sapiens (Human).